The chain runs to 133 residues: Ribosomal silencing factor RsfS (133 aa).

This sequence belongs to the Iojap/RsfS family. In terms of assembly, interacts with ribosomal protein uL14 (rplN).

Its subcellular location is the cytoplasm. Functions as a ribosomal silencing factor. Interacts with ribosomal protein uL14 (rplN), blocking formation of intersubunit bridge B8. Prevents association of the 30S and 50S ribosomal subunits and the formation of functional ribosomes, thus repressing translation. The protein is Ribosomal silencing factor RsfS of Zymomonas mobilis subsp. mobilis (strain ATCC 31821 / ZM4 / CP4).